Here is a 218-residue protein sequence, read N- to C-terminus: MTSSSSSSGSPCGACKFLRRKCAKGCVFAPYFCHEQGASHFAAIHKVFGASNASKLLSHLPISDRCEAAITISYEAQARLQDPIYGCVSHIFALQQQVVNLQAELEILKQQAAQSMIFADSPTSENPNSYYGDTTKAPYHHDHQNIYHHHDQTHLVYQTGSSGTVQHGDATESSYHNETSSGMGEFSIYSDLEQHLNTFNQDHLKELQSANFGYISFS.

The region spanning 10-112 is the LOB domain; that stretch reads SPCGACKFLR…AELEILKQQA (103 aa).

This sequence belongs to the LOB domain-containing protein family. As to expression, expressed in roots.

Functionally, involved in lateral root formation. Regulated by the transcriptional activators ARF7 and ARF19. In Arabidopsis thaliana (Mouse-ear cress), this protein is LOB domain-containing protein 29 (LBD29).